A 708-amino-acid chain; its full sequence is Elongation factor G 1 (708 aa).

The tr-type G domain maps to Ala-9 to Leu-295. Residues Ala-18 to Thr-25, Asp-86 to His-90, and Asn-140 to Asp-143 each bind GTP.

This sequence belongs to the TRAFAC class translation factor GTPase superfamily. Classic translation factor GTPase family. EF-G/EF-2 subfamily.

Its subcellular location is the cytoplasm. Its function is as follows. Catalyzes the GTP-dependent ribosomal translocation step during translation elongation. During this step, the ribosome changes from the pre-translocational (PRE) to the post-translocational (POST) state as the newly formed A-site-bound peptidyl-tRNA and P-site-bound deacylated tRNA move to the P and E sites, respectively. Catalyzes the coordinated movement of the two tRNA molecules, the mRNA and conformational changes in the ribosome. The sequence is that of Elongation factor G 1 (fusA) from Streptomyces coelicolor (strain ATCC BAA-471 / A3(2) / M145).